The primary structure comprises 387 residues: Methylthioribose-1-phosphate isomerase (387 aa).

Aspartate 257 serves as the catalytic Proton donor.

This sequence belongs to the eIF-2B alpha/beta/delta subunits family. MtnA subfamily.

It localises to the cytoplasm. The protein resides in the nucleus. The enzyme catalyses 5-(methylsulfanyl)-alpha-D-ribose 1-phosphate = 5-(methylsulfanyl)-D-ribulose 1-phosphate. The protein operates within amino-acid biosynthesis; L-methionine biosynthesis via salvage pathway; L-methionine from S-methyl-5-thio-alpha-D-ribose 1-phosphate: step 1/6. Its function is as follows. Catalyzes the interconversion of methylthioribose-1-phosphate (MTR-1-P) into methylthioribulose-1-phosphate (MTRu-1-P). This is Methylthioribose-1-phosphate isomerase (mri1) from Aspergillus fumigatus (strain CBS 144.89 / FGSC A1163 / CEA10) (Neosartorya fumigata).